A 482-amino-acid polypeptide reads, in one-letter code: D-inositol 3-phosphate glycosyltransferase (482 aa).

His63 lines the 1D-myo-inositol 3-phosphate pocket. UDP-N-acetyl-alpha-D-glucosamine-binding positions include 69-70 (QP) and Gly77. Residues 74–79 (DAGGMN), Lys132, Tyr165, Thr189, and Arg209 contribute to the 1D-myo-inositol 3-phosphate site. UDP-N-acetyl-alpha-D-glucosamine contacts are provided by Arg289, Lys294, and Gln355. 3 residues coordinate Mg(2+): Tyr364, Arg365, and Ala367. Residues Glu377 and Glu385 each coordinate UDP-N-acetyl-alpha-D-glucosamine. Mg(2+) is bound at residue Thr391.

It belongs to the glycosyltransferase group 1 family. MshA subfamily. Homodimer.

It carries out the reaction 1D-myo-inositol 3-phosphate + UDP-N-acetyl-alpha-D-glucosamine = 1D-myo-inositol 2-acetamido-2-deoxy-alpha-D-glucopyranoside 3-phosphate + UDP + H(+). Its function is as follows. Catalyzes the transfer of a N-acetyl-glucosamine moiety to 1D-myo-inositol 3-phosphate to produce 1D-myo-inositol 2-acetamido-2-deoxy-glucopyranoside 3-phosphate in the mycothiol biosynthesis pathway. The protein is D-inositol 3-phosphate glycosyltransferase of Salinispora tropica (strain ATCC BAA-916 / DSM 44818 / JCM 13857 / NBRC 105044 / CNB-440).